The primary structure comprises 94 residues: Large ribosomal subunit protein uL23 (94 aa).

It belongs to the universal ribosomal protein uL23 family. Part of the 50S ribosomal subunit. Contacts protein L29, and trigger factor when it is bound to the ribosome.

In terms of biological role, one of the early assembly proteins it binds 23S rRNA. One of the proteins that surrounds the polypeptide exit tunnel on the outside of the ribosome. Forms the main docking site for trigger factor binding to the ribosome. This chain is Large ribosomal subunit protein uL23, found in Mycoplasma mycoides subsp. mycoides SC (strain CCUG 32753 / NCTC 10114 / PG1).